Here is a 170-residue protein sequence, read N- to C-terminus: Large ribosomal subunit protein uL11 (170 aa).

Belongs to the universal ribosomal protein uL11 family. In terms of assembly, part of the ribosomal stalk of the 50S ribosomal subunit. Interacts with L10 and the large rRNA to form the base of the stalk. L10 forms an elongated spine to which L12 dimers bind in a sequential fashion forming a multimeric L10(L12)X complex.

Functionally, forms part of the ribosomal stalk which helps the ribosome interact with GTP-bound translation factors. In Saccharolobus solfataricus (strain ATCC 35092 / DSM 1617 / JCM 11322 / P2) (Sulfolobus solfataricus), this protein is Large ribosomal subunit protein uL11.